Consider the following 443-residue polypeptide: 5-methylthioadenosine/S-adenosylhomocysteine deaminase (443 aa).

Residues H74 and H76 each coordinate Zn(2+). Substrate is bound by residues E103 and H196. A Zn(2+)-binding site is contributed by H223. Substrate-binding residues include E226 and D311. D311 contributes to the Zn(2+) binding site.

The protein belongs to the metallo-dependent hydrolases superfamily. MTA/SAH deaminase family. It depends on Zn(2+) as a cofactor.

It carries out the reaction S-adenosyl-L-homocysteine + H2O + H(+) = S-inosyl-L-homocysteine + NH4(+). The enzyme catalyses S-methyl-5'-thioadenosine + H2O + H(+) = S-methyl-5'-thioinosine + NH4(+). In terms of biological role, catalyzes the deamination of 5-methylthioadenosine and S-adenosyl-L-homocysteine into 5-methylthioinosine and S-inosyl-L-homocysteine, respectively. Is also able to deaminate adenosine. The chain is 5-methylthioadenosine/S-adenosylhomocysteine deaminase from Haloquadratum walsbyi (strain DSM 16790 / HBSQ001).